Consider the following 458-residue polypeptide: ATP synthase subunit beta (458 aa).

Residue 148 to 155 (GGAGVGKT) coordinates ATP.

It belongs to the ATPase alpha/beta chains family. F-type ATPases have 2 components, CF(1) - the catalytic core - and CF(0) - the membrane proton channel. CF(1) has five subunits: alpha(3), beta(3), gamma(1), delta(1), epsilon(1). CF(0) has three main subunits: a(1), b(2) and c(9-12). The alpha and beta chains form an alternating ring which encloses part of the gamma chain. CF(1) is attached to CF(0) by a central stalk formed by the gamma and epsilon chains, while a peripheral stalk is formed by the delta and b chains.

It is found in the cell inner membrane. The enzyme catalyses ATP + H2O + 4 H(+)(in) = ADP + phosphate + 5 H(+)(out). Its function is as follows. Produces ATP from ADP in the presence of a proton gradient across the membrane. The catalytic sites are hosted primarily by the beta subunits. This Ectopseudomonas mendocina (strain ymp) (Pseudomonas mendocina) protein is ATP synthase subunit beta.